The sequence spans 154 residues: Myoglobin (154 aa).

Residues 2–148 enclose the Globin domain; sequence GLSDGEWQLV…FRNDMAAKYK (147 aa). A Phosphoserine modification is found at serine 4. Residue histidine 65 coordinates nitrite. Histidine 65 lines the O2 pocket. Threonine 68 carries the post-translational modification Phosphothreonine. Residue histidine 94 coordinates heme b.

It belongs to the globin family. Monomeric.

The protein localises to the cytoplasm. The protein resides in the sarcoplasm. The enzyme catalyses Fe(III)-heme b-[protein] + nitric oxide + H2O = Fe(II)-heme b-[protein] + nitrite + 2 H(+). The catalysed reaction is H2O2 + AH2 = A + 2 H2O. Functionally, monomeric heme protein which primary function is to store oxygen and facilitate its diffusion within muscle tissues. Reversibly binds oxygen through a pentacoordinated heme iron and enables its timely and efficient release as needed during periods of heightened demand. Depending on the oxidative conditions of tissues and cells, and in addition to its ability to bind oxygen, it also has a nitrite reductase activity whereby it regulates the production of bioactive nitric oxide. Under stress conditions, like hypoxia and anoxia, it also protects cells against reactive oxygen species thanks to its pseudoperoxidase activity. This Sus scrofa (Pig) protein is Myoglobin (MB).